We begin with the raw amino-acid sequence, 505 residues long: Histidine--tRNA ligase, mitochondrial (505 aa).

The N-terminal 31 residues, 1–31 (MPHLGPLRRRAWAALLGQLLRPPSTVCTRGC), are a transit peptide targeting the mitochondrion. Ser-66 bears the Phosphoserine mark. L-histidine-binding positions include 130 to 132 (DLT), Arg-157, Gln-173, Asp-177, Arg-326, and 330 to 331 (YY). Lys-443 is subject to N6-acetyllysine.

It belongs to the class-II aminoacyl-tRNA synthetase family. As to quaternary structure, homodimer.

The protein resides in the mitochondrion. It carries out the reaction tRNA(His) + L-histidine + ATP = L-histidyl-tRNA(His) + AMP + diphosphate + H(+). Mitochondrial aminoacyl-tRNA synthetase that catalyzes the ATP-dependent ligation of histidine to the 3'-end of its cognate tRNA, via the formation of an aminoacyl-adenylate intermediate (His-AMP). The protein is Histidine--tRNA ligase, mitochondrial (Hars2) of Mus musculus (Mouse).